Here is a 214-residue protein sequence, read N- to C-terminus: Putative germin-like protein 9-2 (214 aa).

The signal sequence occupies residues 1–25 (MALSYYSLLLLLLAVWAPALTLVMA). N-linked (GlcNAc...) asparagine glycosylation is found at Asn-44 and Asn-60. The region spanning 56–202 (RKVFNTSSAP…SFKTDVPTIL (147 aa)) is the Cupin type-1 domain. The Mn(2+) site is built by His-104, His-106, Glu-111, and His-150.

It belongs to the germin family. As to quaternary structure, oligomer (believed to be a pentamer but probably hexamer).

It is found in the secreted. The protein localises to the extracellular space. It localises to the apoplast. May play a role in plant defense. Probably has no oxalate oxidase activity even if the active site is conserved. The chain is Putative germin-like protein 9-2 from Oryza sativa subsp. japonica (Rice).